We begin with the raw amino-acid sequence, 313 residues long: BTB/POZ domain-containing adapter for CUL3-mediated RhoA degradation protein 3 (313 aa).

N-acetylmethionine is present on Met1. Position 23 is a phosphoserine (Ser23). The 69-residue stretch at 32 to 100 folds into the BTB domain; that stretch reads KYVKLNVGGA…LRDGAVPLPE (69 aa). Positions 239 to 245 match the PCNA-binding motif; sequence QTKVEFP.

The protein belongs to the BACURD family. As to quaternary structure, homotetramer; forms a two-fold symmetric tetramer in solution. Interacts with CUL3; interaction is direct and forms a 5:5 heterodecamer. Component of the BCR(BACURD3) E3 ubiquitin ligase complex, at least composed of CUL3, KCTD10/BACURD3 and RBX1. Interacts with DNA polymerase delta subunit 2/POLD2. Interacts with PCNA.

The protein localises to the nucleus. Its pathway is protein modification; protein ubiquitination. Its function is as follows. Substrate-specific adapter of a BCR (BTB-CUL3-RBX1) E3 ubiquitin-protein ligase complex. The BCR(BACURD3) E3 ubiquitin ligase complex mediates the ubiquitination of target proteins, leading to their degradation by the proteasome. This Homo sapiens (Human) protein is BTB/POZ domain-containing adapter for CUL3-mediated RhoA degradation protein 3 (KCTD10).